We begin with the raw amino-acid sequence, 252 residues long: Vitamin B12 import ATP-binding protein BtuD (252 aa).

The 236-residue stretch at 2–237 (IQIKSLSVGA…EQLESVFNTQ (236 aa)) folds into the ABC transporter domain. 30-37 (GPNGSGKS) contacts ATP.

The protein belongs to the ABC transporter superfamily. Vitamin B12 importer (TC 3.A.1.13.1) family. As to quaternary structure, the complex is composed of two ATP-binding proteins (BtuD), two transmembrane proteins (BtuC) and a solute-binding protein (BtuF).

The protein localises to the cell inner membrane. The enzyme catalyses an R-cob(III)alamin(out) + ATP + H2O = an R-cob(III)alamin(in) + ADP + phosphate + H(+). Functionally, part of the ABC transporter complex BtuCDF involved in vitamin B12 import. Responsible for energy coupling to the transport system. This Vibrio atlanticus (strain LGP32) (Vibrio splendidus (strain Mel32)) protein is Vitamin B12 import ATP-binding protein BtuD.